The following is a 339-amino-acid chain: DNA-directed RNA polymerase subunit alpha (339 aa).

Residues 1–235 (MVIQKNWQEL…DQLQVFVNFE (235 aa)) form an alpha N-terminal domain (alpha-NTD) region. An alpha C-terminal domain (alpha-CTD) region spans residues 251–339 (FNPALLKKVD…DLAKRFEEHY (89 aa)).

This sequence belongs to the RNA polymerase alpha chain family. Homodimer. The RNAP catalytic core consists of 2 alpha, 1 beta, 1 beta' and 1 omega subunit. When a sigma factor is associated with the core the holoenzyme is formed, which can initiate transcription.

It carries out the reaction RNA(n) + a ribonucleoside 5'-triphosphate = RNA(n+1) + diphosphate. Functionally, DNA-dependent RNA polymerase catalyzes the transcription of DNA into RNA using the four ribonucleoside triphosphates as substrates. The sequence is that of DNA-directed RNA polymerase subunit alpha from Methylobacterium radiotolerans (strain ATCC 27329 / DSM 1819 / JCM 2831 / NBRC 15690 / NCIMB 10815 / 0-1).